Here is a 44-residue protein sequence, read N- to C-terminus: Phycoerythrin alpha-1 chain (44 aa).

The segment at 1–44 is disordered; sequence AMDKSAKAPQITIFDHRGCSRAPKSETGGTATKDDQMMVKVSQV. K4 bears the 5-hydroxylysine mark. C19 and R21 together coordinate 15,16-dihydrobiliverdin. Residues 24-26 form a 15,16-dihydrobiliverdin chromophore region; it reads KSE. A 15,16-dihydrobiliverdin-binding site is contributed by K40.

This sequence belongs to the phycoerythrin family. Heterotetramer of 2 different alpha chains and 2 identical beta chains. The subunit composition could comprise of any combination of 2 out of 4 different alpha units with an invariant beta unit. Post-translationally, contains one covalently linked 15,16-dihydrobiliverdin chromophore.

Its subcellular location is the plastid. The protein resides in the chloroplast thylakoid membrane. Its function is as follows. Light-harvesting photosynthetic tetrapyrrole chromophore-protein from the phycobiliprotein complex. The sequence is that of Phycoerythrin alpha-1 chain (cpeA1) from Rhodomonas sp. (strain CS 24) (Chroomonas sp. (strain CS24)).